Reading from the N-terminus, the 189-residue chain is uncharacterized protein (189 aa).

Positions 1–19 (MNKLTILFLILALISVIYA) are cleaved as a signal peptide. The segment at 24-189 (PSSSEDSSSN…GSGSSGTVYY (166 aa)) is disordered. Over residues 25-69 (SSSEDSSSNDSNSQVTGSQSYSGSQSDSNSGSESHTINTGSSYSG) the composition is skewed to low complexity. Gly residues predominate over residues 70 to 101 (SGSGSSGISGGSGSGSGSGSGSGSGSGSGSGA). Over residues 102–142 (VSGSQSGSGAVSGSQSGSGAVSGSQSGVQTGSQSGAGSASG) the composition is skewed to low complexity. The segment covering 144 to 157 (FTGNPSGSQSQEIN) has biased composition (polar residues). The segment covering 165 to 183 (SGSGAPTGAATGSGSGSGS) has biased composition (gly residues).

This is an uncharacterized protein from Dictyostelium discoideum (Social amoeba).